A 328-amino-acid chain; its full sequence is MMDNHEVVTAIQQKTALEIEEKLGVDLDKHWENYEIQLSEDNRVIEEIHPDMRLSLGELLSVVNRCGTEKEMENFNQIADYLEPYYEAELIQEEFYDMPIAKLTTDRQQNVKVECLSEYVSNSDIAFDFNDSIFNAVNHISHSITKSHNEIMNGDVEYQGLYPINEDMVIYCESTGKPLQQDEAAYHFEGYGYVVAEEVSPEELEGKDAYYTTIGYEDVEEKRLAPIRYIEEKKIEDGELRFNPVEEIVNDHKTEAEEVFQMESAKTVSSVMKGHGAIVVQESKTTPEVARRYVGKDTVHEEEQQQISQTREQARRHYMMKQMLGRDY.

This is an uncharacterized protein from Bacillus anthracis.